Reading from the N-terminus, the 287-residue chain is D-apionate oxidoisomerase (287 aa).

Residues 13-15, Glu36, and Asp71 contribute to the NAD(+) site; that span reads GKM. Zn(2+) contacts are provided by His116 and Glu186.

Belongs to the ApnO family. The cofactor is Zn(2+).

The catalysed reaction is D-apionate + NAD(+) = 3-oxoisoapionate + NADH + H(+). It functions in the pathway carbohydrate metabolism. In terms of biological role, involved in catabolism of D-apiose. Catalyzes the conversion of D-apionate to 3-oxo-isoapionate. The chain is D-apionate oxidoisomerase from Blautia hydrogenotrophica (strain DSM 10507 / JCM 14656 / S5a33) (Ruminococcus hydrogenotrophicus).